Consider the following 76-residue polypeptide: Acyl carrier protein (76 aa).

A Carrier domain is found at 1–76 (MSVEEKISKI…DAIAYIKNKQ (76 aa)). Ser-36 is modified (O-(pantetheine 4'-phosphoryl)serine).

This sequence belongs to the acyl carrier protein (ACP) family. Post-translationally, 4'-phosphopantetheine is transferred from CoA to a specific serine of apo-ACP by AcpS. This modification is essential for activity because fatty acids are bound in thioester linkage to the sulfhydryl of the prosthetic group.

Its subcellular location is the cytoplasm. It functions in the pathway lipid metabolism; fatty acid biosynthesis. Its function is as follows. Carrier of the growing fatty acid chain in fatty acid biosynthesis. In Nitratidesulfovibrio vulgaris (strain DSM 19637 / Miyazaki F) (Desulfovibrio vulgaris), this protein is Acyl carrier protein.